A 297-amino-acid polypeptide reads, in one-letter code: Nucleotide-binding protein Bsph_0448 (297 aa).

ATP is bound at residue 19-26 (GMSGAGKT). Residue 70–73 (DMRG) coordinates GTP.

Belongs to the RapZ-like family.

In terms of biological role, displays ATPase and GTPase activities. The chain is Nucleotide-binding protein Bsph_0448 from Lysinibacillus sphaericus (strain C3-41).